Here is a 448-residue protein sequence, read N- to C-terminus: Alpha-2B adrenergic receptor (448 aa).

Residues 1–12 lie on the Extracellular side of the membrane; it reads MDHQEPYSVQAT. The chain crosses the membrane as a helical span at residues 13–38; sequence AAIAAVITFLILFTIFGNALVILAVL. Over 39–49 the chain is Cytoplasmic; the sequence is TSRSLPAPQNL. The helical transmembrane segment at 50–75 threads the bilayer; sequence FLVSLAAADILVATLIIPFSLANELL. Topologically, residues 76–85 are extracellular; sequence GYWYFWRTWC. A disulfide bridge connects residues cysteine 85 and cysteine 163. Residues 86–108 traverse the membrane as a helical segment; the sequence is EVYLALDVLFCTSSIVHLCAISL. The Cytoplasmic segment spans residues 109-130; the sequence is DRYWAVSRALEYNSKRTPRRIK. A helical transmembrane segment spans residues 131–153; sequence CIILTVWLIAAVISLPPLIYKGD. Residues 154-168 lie on the Extracellular side of the membrane; sequence QGPSPRGPQCKINQE. A helical transmembrane segment spans residues 169–192; sequence AWYILASSIGSFFAPCLIMILVYL. Topologically, residues 193-370 are cytoplasmic; it reads RIYLIAKRSH…MTREKRFTFV (178 aa). Positions 203–326 are disordered; sequence RRGPRAKGGP…PASMCSPSLQ (124 aa). Over residues 293-309 the composition is skewed to acidic residues; it reads AEEEAEEEEEEEGDECE. Residues 371-394 form a helical membrane-spanning segment; the sequence is LAVVIGVFVLCWFPFFFTYSLGAI. Residues 395–403 are Extracellular-facing; that stretch reads CPQHCKVPH. The helical transmembrane segment at 404–427 threads the bilayer; the sequence is GLFQFFFWIGYCNSSLNPVIYTIF. Residues 428–448 lie on the Cytoplasmic side of the membrane; sequence NQDFRRAFRRILCRQWTQTAW. A lipid anchor (S-palmitoyl cysteine) is attached at cysteine 440.

Belongs to the G-protein coupled receptor 1 family. Adrenergic receptor subfamily. ADRA2B sub-subfamily. As to quaternary structure, interacts with RAB26. Interacts with PPP1R9B.

The protein localises to the cell membrane. Alpha-2 adrenergic receptors mediate the catecholamine-induced inhibition of adenylate cyclase through the action of G proteins. The sequence is that of Alpha-2B adrenergic receptor (ADRA2B) from Cavia porcellus (Guinea pig).